Reading from the N-terminus, the 429-residue chain is Argininosuccinate lyase (429 aa).

Belongs to the lyase 1 family. Argininosuccinate lyase subfamily.

Its subcellular location is the cytoplasm. It carries out the reaction 2-(N(omega)-L-arginino)succinate = fumarate + L-arginine. It participates in amino-acid biosynthesis; L-arginine biosynthesis; L-arginine from L-ornithine and carbamoyl phosphate: step 3/3. The polypeptide is Argininosuccinate lyase (Pyrobaculum neutrophilum (strain DSM 2338 / JCM 9278 / NBRC 100436 / V24Sta) (Thermoproteus neutrophilus)).